The following is a 228-amino-acid chain: Ribonuclease HII (228 aa).

Residues 11–202 (GPVAGVDEAG…VVAAAQLHGM (192 aa)) form the RNase H type-2 domain. A divalent metal cation-binding residues include Asp-17, Glu-18, and Asp-111.

Belongs to the RNase HII family. Requires Mn(2+) as cofactor. The cofactor is Mg(2+).

Its subcellular location is the cytoplasm. The enzyme catalyses Endonucleolytic cleavage to 5'-phosphomonoester.. Endonuclease that specifically degrades the RNA of RNA-DNA hybrids. In Saccharopolyspora erythraea (strain ATCC 11635 / DSM 40517 / JCM 4748 / NBRC 13426 / NCIMB 8594 / NRRL 2338), this protein is Ribonuclease HII.